Consider the following 160-residue polypeptide: S-ribosylhomocysteine lyase (160 aa).

Fe cation contacts are provided by His57, His61, and Cys127.

The protein belongs to the LuxS family. As to quaternary structure, homodimer. It depends on Fe cation as a cofactor.

It carries out the reaction S-(5-deoxy-D-ribos-5-yl)-L-homocysteine = (S)-4,5-dihydroxypentane-2,3-dione + L-homocysteine. Its function is as follows. Involved in the synthesis of autoinducer 2 (AI-2) which is secreted by bacteria and is used to communicate both the cell density and the metabolic potential of the environment. The regulation of gene expression in response to changes in cell density is called quorum sensing. Catalyzes the transformation of S-ribosylhomocysteine (RHC) to homocysteine (HC) and 4,5-dihydroxy-2,3-pentadione (DPD). The polypeptide is S-ribosylhomocysteine lyase (Streptococcus thermophilus (strain CNRZ 1066)).